A 100-amino-acid chain; its full sequence is Large ribosomal subunit protein uL23 (100 aa).

This sequence belongs to the universal ribosomal protein uL23 family. As to quaternary structure, part of the 50S ribosomal subunit. Contacts protein L29, and trigger factor when it is bound to the ribosome.

One of the early assembly proteins it binds 23S rRNA. One of the proteins that surrounds the polypeptide exit tunnel on the outside of the ribosome. Forms the main docking site for trigger factor binding to the ribosome. The polypeptide is Large ribosomal subunit protein uL23 (Aeromonas hydrophila subsp. hydrophila (strain ATCC 7966 / DSM 30187 / BCRC 13018 / CCUG 14551 / JCM 1027 / KCTC 2358 / NCIMB 9240 / NCTC 8049)).